We begin with the raw amino-acid sequence, 326 residues long: Glyceraldehyde-3-phosphate dehydrogenase, cytosolic (326 aa).

Residues 2–3, Asp-24, and Arg-71 contribute to the NAD(+) site; that span reads RI. D-glyceraldehyde 3-phosphate-binding positions include 142–144, Thr-173, 202–203, and Arg-225; these read SCT and TG. Cys-143 acts as the Nucleophile in catalysis. Asn-307 lines the NAD(+) pocket.

It belongs to the glyceraldehyde-3-phosphate dehydrogenase family.

It localises to the cytoplasm. The catalysed reaction is D-glyceraldehyde 3-phosphate + phosphate + NAD(+) = (2R)-3-phospho-glyceroyl phosphate + NADH + H(+). Its pathway is carbohydrate degradation; glycolysis; pyruvate from D-glyceraldehyde 3-phosphate: step 1/5. In terms of biological role, key enzyme in glycolysis that catalyzes the first step of the pathway by converting D-glyceraldehyde 3-phosphate (G3P) into 3-phospho-D-glyceroyl phosphate. Essential for the maintenance of cellular ATP levels and carbohydrate metabolism. The protein is Glyceraldehyde-3-phosphate dehydrogenase, cytosolic (GAPC) of Nicotiana tabacum (Common tobacco).